The following is a 95-amino-acid chain: Protein RALF-like 16 (95 aa).

Positions Met1–Ala29 are cleaved as a signal peptide. 2 disulfides stabilise this stretch: Cys45–Cys53 and Cys65–Cys71.

It belongs to the plant rapid alkalinization factor (RALF) family.

It localises to the secreted. In terms of biological role, cell signaling peptide that may regulate plant stress, growth, and development. Mediates a rapid alkalinization of extracellular space by mediating a transient increase in the cytoplasmic Ca(2+) concentration leading to a calcium-dependent signaling events through a cell surface receptor and a concomitant activation of some intracellular mitogen-activated protein kinases. The protein is Protein RALF-like 16 (RALFL16) of Arabidopsis thaliana (Mouse-ear cress).